The chain runs to 219 residues: Ion-translocating oxidoreductase complex subunit G (219 aa).

A helical transmembrane segment spans residues 25–45 (GLLLGLFSLVSALMLALASDA). An FMN phosphoryl threonine modification is found at T187.

This sequence belongs to the RnfG family. In terms of assembly, the complex is composed of six subunits: RnfA, RnfB, RnfC, RnfD, RnfE and RnfG. FMN is required as a cofactor.

The protein localises to the cellular chromatophore membrane. In terms of biological role, part of a membrane-bound complex that couples electron transfer with translocation of ions across the membrane. The sequence is that of Ion-translocating oxidoreductase complex subunit G from Cereibacter sphaeroides (strain ATCC 17023 / DSM 158 / JCM 6121 / CCUG 31486 / LMG 2827 / NBRC 12203 / NCIMB 8253 / ATH 2.4.1.) (Rhodobacter sphaeroides).